We begin with the raw amino-acid sequence, 450 residues long: Putative zinc metalloprotease PA3649 (450 aa).

His-21 is a binding site for Zn(2+). Glu-22 is an active-site residue. His-25 contacts Zn(2+). A helical membrane pass occupies residues Ile-97 to Ala-119. A PDZ domain is found at Gly-199 to Val-291. Residues Ala-425 to Val-444 form a helical membrane-spanning segment.

The protein belongs to the peptidase M50B family. Requires Zn(2+) as cofactor.

It localises to the cell inner membrane. This is Putative zinc metalloprotease PA3649 from Pseudomonas aeruginosa (strain ATCC 15692 / DSM 22644 / CIP 104116 / JCM 14847 / LMG 12228 / 1C / PRS 101 / PAO1).